The primary structure comprises 129 residues: Small ribosomal subunit protein uS11 (129 aa).

Belongs to the universal ribosomal protein uS11 family. Part of the 30S ribosomal subunit. Interacts with proteins S7 and S18. Binds to IF-3.

In terms of biological role, located on the platform of the 30S subunit, it bridges several disparate RNA helices of the 16S rRNA. Forms part of the Shine-Dalgarno cleft in the 70S ribosome. The protein is Small ribosomal subunit protein uS11 of Zymomonas mobilis subsp. mobilis (strain ATCC 31821 / ZM4 / CP4).